A 154-amino-acid chain; its full sequence is UPF0756 membrane protein RBAM_026200 (154 aa).

A run of 4 helical transmembrane segments spans residues 14-34, 54-74, 87-107, and 117-137; these read AIAL…LIVI, WGVT…DIGF, WIAL…LTLL, and LVIG…GPLI.

It belongs to the UPF0756 family.

It is found in the cell membrane. This is UPF0756 membrane protein RBAM_026200 from Bacillus velezensis (strain DSM 23117 / BGSC 10A6 / LMG 26770 / FZB42) (Bacillus amyloliquefaciens subsp. plantarum).